We begin with the raw amino-acid sequence, 1392 residues long: DNA-directed RNA polymerase subunit beta (1392 aa).

The protein belongs to the RNA polymerase beta chain family. The RNAP catalytic core consists of 2 alpha, 1 beta, 1 beta' and 1 omega subunit. When a sigma factor is associated with the core the holoenzyme is formed, which can initiate transcription.

The catalysed reaction is RNA(n) + a ribonucleoside 5'-triphosphate = RNA(n+1) + diphosphate. Its function is as follows. DNA-dependent RNA polymerase catalyzes the transcription of DNA into RNA using the four ribonucleoside triphosphates as substrates. The chain is DNA-directed RNA polymerase subunit beta from Neisseria meningitidis serogroup A / serotype 4A (strain DSM 15465 / Z2491).